The primary structure comprises 267 residues: Exodeoxyribonuclease III (267 aa).

E34 contacts Mg(2+). Y109 is a catalytic residue. Positions 151, 153, and 258 each coordinate Mg(2+). D151 acts as the Proton donor/acceptor in catalysis.

This sequence belongs to the DNA repair enzymes AP/ExoA family. As to quaternary structure, monomer. Requires Mg(2+) as cofactor. Mn(2+) serves as cofactor.

It carries out the reaction Exonucleolytic cleavage in the 3'- to 5'-direction to yield nucleoside 5'-phosphates.. In terms of biological role, major apurinic-apyrimidinic endonuclease of E.coli. It removes the damaged DNA at cytosines and guanines by cleaving on the 3'-side of the AP site by a beta-elimination reaction. The sequence is that of Exodeoxyribonuclease III (xthA) from Haemophilus influenzae (strain ATCC 51907 / DSM 11121 / KW20 / Rd).